We begin with the raw amino-acid sequence, 598 residues long: MLKTHSCALTQENIGTEVTLAGWVHRRRDHGGVIFIDLRDREGIVQVVFNPEQSAACLDIGKELRSEYVLQVKGTVSHRPAGTENSRMLSGLVEVVAEGAKILNTAKTPPFYINEEVEVDESLRLKYRYLDIRRQGMKNNLIIRHKTVSFMRQFLNDRGFIEIETPILIKSTPEGARDYLVPSRLFPGQFFALPQSPQQLKQLLMVAGMEKYYQVARCFRDEDLRADRQPEFTQLDMEMSFVDENDMMQLMEDLFTGLVASVRPDMKYNKKFPRISFADAMEKYGCDKPDLRFGMELADITDIGASSAFGVFKNVAAQGGAIKAISAPGCGGYNKSQQEELINLAKKYGAAGLVPISLGAESGELKDLTMEMVKSVSAKYLTLEEIKTIAERSGAKPGGLILIVAGARKMVNSVLGEMRNHLAAKLDLCDKNELSFAFVVDFPLFQWDEEGKRWDSVHHPFTAPLESDLPLMDTDPARVGSRAYDVVCNGYEIAGGSIRIHQADLQRKVFHLLGYNNEQIDERFGHLLEAFEFGAPPHGGVAPGIDRFVMLLAGETSIREVIPFPKNQAAQDLLFGAPSVVDDKQIRDLHIRIQTEKE.

Residue E174 participates in L-aspartate binding. Residues 198–201 (QQLK) form an aspartate region. R220 is a binding site for L-aspartate. ATP contacts are provided by residues 220–222 (RDE) and Q229. H458 contributes to the L-aspartate binding site. Residue E492 coordinates ATP. L-aspartate is bound at residue R499. 544–547 (GIDR) is an ATP binding site.

This sequence belongs to the class-II aminoacyl-tRNA synthetase family. Type 1 subfamily. In terms of assembly, homodimer.

Its subcellular location is the cytoplasm. It carries out the reaction tRNA(Asx) + L-aspartate + ATP = L-aspartyl-tRNA(Asx) + AMP + diphosphate. Functionally, aspartyl-tRNA synthetase with relaxed tRNA specificity since it is able to aspartylate not only its cognate tRNA(Asp) but also tRNA(Asn). Reaction proceeds in two steps: L-aspartate is first activated by ATP to form Asp-AMP and then transferred to the acceptor end of tRNA(Asp/Asn). This Dehalococcoides mccartyi (strain ATCC BAA-2266 / KCTC 15142 / 195) (Dehalococcoides ethenogenes (strain 195)) protein is Aspartate--tRNA(Asp/Asn) ligase.